The sequence spans 500 residues: Lysine--tRNA ligase (500 aa).

Residues Glu-410 and Glu-417 each contribute to the Mg(2+) site.

Belongs to the class-II aminoacyl-tRNA synthetase family. As to quaternary structure, homodimer. Mg(2+) serves as cofactor.

The protein localises to the cytoplasm. It carries out the reaction tRNA(Lys) + L-lysine + ATP = L-lysyl-tRNA(Lys) + AMP + diphosphate. This Pseudomonas syringae pv. syringae (strain B728a) protein is Lysine--tRNA ligase.